A 323-amino-acid chain; its full sequence is Ankyrin repeat and SOCS box protein 11 (323 aa).

ANK repeat units follow at residues 64-93, 97-126, 130-159, 162-191, 195-224, and 227-256; these read ADRSPLHEAAAQGRLLALKTLIAQGVNVNL, NRVSSLHEACLGGHVACAKALLENGAHVNG, HGATPLFNACCSGSAACVNVLLEFGAKAQF, HLASPIHEAVKRGHRECMEILLANNVNIDH, QLGTPLYVACTYQRVDCVKKLLELGASVDH, and WLDTPLHAAARQSNVEVIHLLTDYGANLKR. The SOCS box domain maps to 274–323; sequence VEQALLLCEGPPALSQLCRLCVRKCLGRACHQAIHKLHLPEPLERFLLYQ.

This sequence belongs to the ankyrin SOCS box (ASB) family. As to quaternary structure, substrate-recognition component of the ECS(ASB11) complex, composed of ASB11, CUL5, ELOB, ELOC and RNF7/RBX2.

Its subcellular location is the endoplasmic reticulum. Its pathway is protein modification; protein ubiquitination. Functionally, substrate-recognition component of a cullin-5-RING E3 ubiquitin-protein ligase complex (ECS complex, also named CRL5 complex), which mediates the ubiquitination and subsequent proteasomal degradation of target proteins, such as BIK, DIRAS2 and RPN1. The ECS(ASB11) complex acts as a regulator of the endoplasmic reticulum unfolded protein response by mediating ubiquitination and degradation of BIK. The protein is Ankyrin repeat and SOCS box protein 11 (ASB11) of Pongo abelii (Sumatran orangutan).